Here is a 354-residue protein sequence, read N- to C-terminus: Nicotinate-nucleotide--dimethylbenzimidazole phosphoribosyltransferase (354 aa).

Catalysis depends on Glu-313, which acts as the Proton acceptor.

This sequence belongs to the CobT family.

It carries out the reaction 5,6-dimethylbenzimidazole + nicotinate beta-D-ribonucleotide = alpha-ribazole 5'-phosphate + nicotinate + H(+). The protein operates within nucleoside biosynthesis; alpha-ribazole biosynthesis; alpha-ribazole from 5,6-dimethylbenzimidazole: step 1/2. Catalyzes the synthesis of alpha-ribazole-5'-phosphate from nicotinate mononucleotide (NAMN) and 5,6-dimethylbenzimidazole (DMB). This Ralstonia nicotianae (strain ATCC BAA-1114 / GMI1000) (Ralstonia solanacearum) protein is Nicotinate-nucleotide--dimethylbenzimidazole phosphoribosyltransferase.